Here is a 183-residue protein sequence, read N- to C-terminus: uncharacterized protein (183 aa).

This sequence belongs to the EUO family.

This is an uncharacterized protein from Chlamydia trachomatis serovar D (strain ATCC VR-885 / DSM 19411 / UW-3/Cx).